The chain runs to 232 residues: Putative B3 domain-containing protein Os11g0242900 (232 aa).

The segment at residues 1 to 51 (MTVELEKIAGSFFISKGWKTFVHRTGLLSGQYIRFQVLTPSKINVLLFDKK) is a DNA-binding region (TF-B3 1). Residues 92 to 121 (SHTSNKETSSDSRTESMTDIPSSSDNSGET) form a disordered region. Positions 95–107 (SNKETSSDSRTES) are enriched in basic and acidic residues. A compositionally biased stretch (polar residues) spans 108–121 (MTDIPSSSDNSGET). The TF-B3 2 DNA-binding region spans 140 to 232 (DIKNYISIIG…PNVKITIDVL (93 aa)).

The protein localises to the nucleus. This chain is Putative B3 domain-containing protein Os11g0242900, found in Oryza sativa subsp. japonica (Rice).